The sequence spans 373 residues: MKIISEGETKLMVPEESTLSKKDTVFYNPVMETNRNISVSVVQSFLDNFKRDEFLMCDPLGGSGARGIRYANELEFNGDLKVSIGDINPSAVKMIKENLKLNELENVEVFHEDANVLLSKNFKVFNVVDLDPFGSPVPYLDSGIRASLTKGGLLCMTATDTAVLCGAYRKTCIRKYNAIPLKGDKELAVRLMIGYAVKMASKYDIGLKPIFSHVTDHYARTFMVTERGAGKADSAIENLGYIRQDSEQKSFKAFEEGYEKGYAGSFYLGEISDKDIVQNSLETAKNRNYSKRAVDILELISKESEIEQVGCFDIHELCSFIKKLVPPVNDIMDNLKENGFKVSRVHYNPYGLKTDAELSDLVVLISEYHSKKY.

The 364-residue stretch at 2 to 365 (KIISEGETKL…AELSDLVVLI (364 aa)) folds into the Trm1 methyltransferase domain. S-adenosyl-L-methionine is bound by residues R35, R66, D86, D113, and A114.

The protein belongs to the class I-like SAM-binding methyltransferase superfamily. Trm1 family.

The enzyme catalyses guanosine(26) in tRNA + 2 S-adenosyl-L-methionine = N(2)-dimethylguanosine(26) in tRNA + 2 S-adenosyl-L-homocysteine + 2 H(+). Its function is as follows. Dimethylates a single guanine residue at position 26 of a number of tRNAs using S-adenosyl-L-methionine as donor of the methyl groups. The protein is tRNA (guanine(26)-N(2))-dimethyltransferase of Methanococcus maripaludis (strain C5 / ATCC BAA-1333).